A 219-amino-acid chain; its full sequence is Thiamine-phosphate synthase (219 aa).

Residues 44–48 (QFREK) and N79 each bind 4-amino-2-methyl-5-(diphosphooxymethyl)pyrimidine. Mg(2+) contacts are provided by D80 and D99. Residue S117 participates in 4-amino-2-methyl-5-(diphosphooxymethyl)pyrimidine binding. 143-145 (TST) serves as a coordination point for 2-[(2R,5Z)-2-carboxy-4-methylthiazol-5(2H)-ylidene]ethyl phosphate. K146 contributes to the 4-amino-2-methyl-5-(diphosphooxymethyl)pyrimidine binding site. 2-[(2R,5Z)-2-carboxy-4-methylthiazol-5(2H)-ylidene]ethyl phosphate-binding positions include G175 and 195–196 (IS).

The protein belongs to the thiamine-phosphate synthase family. Requires Mg(2+) as cofactor.

It carries out the reaction 2-[(2R,5Z)-2-carboxy-4-methylthiazol-5(2H)-ylidene]ethyl phosphate + 4-amino-2-methyl-5-(diphosphooxymethyl)pyrimidine + 2 H(+) = thiamine phosphate + CO2 + diphosphate. The catalysed reaction is 2-(2-carboxy-4-methylthiazol-5-yl)ethyl phosphate + 4-amino-2-methyl-5-(diphosphooxymethyl)pyrimidine + 2 H(+) = thiamine phosphate + CO2 + diphosphate. It catalyses the reaction 4-methyl-5-(2-phosphooxyethyl)-thiazole + 4-amino-2-methyl-5-(diphosphooxymethyl)pyrimidine + H(+) = thiamine phosphate + diphosphate. It functions in the pathway cofactor biosynthesis; thiamine diphosphate biosynthesis; thiamine phosphate from 4-amino-2-methyl-5-diphosphomethylpyrimidine and 4-methyl-5-(2-phosphoethyl)-thiazole: step 1/1. Condenses 4-methyl-5-(beta-hydroxyethyl)thiazole monophosphate (THZ-P) and 2-methyl-4-amino-5-hydroxymethyl pyrimidine pyrophosphate (HMP-PP) to form thiamine monophosphate (TMP). This Bacillus thuringiensis (strain Al Hakam) protein is Thiamine-phosphate synthase.